The chain runs to 184 residues: UPF0149 protein PA14_69010 (184 aa).

This sequence belongs to the UPF0149 family.

The sequence is that of UPF0149 protein PA14_69010 from Pseudomonas aeruginosa (strain UCBPP-PA14).